A 346-amino-acid polypeptide reads, in one-letter code: MGQDLPLLLSAALGKKVNRPPVWMMRQAGRYMKIYRDLRERYPSFRERSENPELSYEISMQPFHAFKPDGVILFSDILTPLPGMGINFEIIESKGPIIEDPIRTLNQVENLRELNPSESLSFVGQVLSSLKKDVNNEATILGFVGAPWTLAAYVVEGKSSKNYSLIKSMAFNEPDLLHKLLDHFAKSIGEYLKYQIKSGAQVVQIFDSWAGQLSPQDYDMFAGPYQKKVVEIVKAEYPETPIILYISGSAGVLERMAKTGVDIISLDWTVDIEEACKRIPRGIGIQGNVDPGILFGNKKSIKERIDDTFNKIKDRKYILNLGHGILPGTPEENAQTFFEHGKKLTY.

Substrate is bound by residues 26 to 30, aspartate 76, tyrosine 153, serine 208, and histidine 323; that span reads RQAGR.

It belongs to the uroporphyrinogen decarboxylase family. In terms of assembly, homodimer.

The protein localises to the cytoplasm. It catalyses the reaction uroporphyrinogen III + 4 H(+) = coproporphyrinogen III + 4 CO2. The protein operates within porphyrin-containing compound metabolism; protoporphyrin-IX biosynthesis; coproporphyrinogen-III from 5-aminolevulinate: step 4/4. Its function is as follows. Catalyzes the decarboxylation of four acetate groups of uroporphyrinogen-III to yield coproporphyrinogen-III. The protein is Uroporphyrinogen decarboxylase of Prochlorococcus marinus (strain AS9601).